The following is a 115-amino-acid chain: Class I hydrophobin C (115 aa).

The signal sequence occupies residues 1-19; it reads MFSRVLVAALVALPVLVSA. 4 cysteine pairs are disulfide-bonded: C36–C93, C43–C87, C44–C74, and C94–C108.

Belongs to the fungal hydrophobin family. In terms of assembly, self-assembles to form functional amyloid fibrils called rodlets. Self-assembly into fibrillar rodlets occurs spontaneously at hydrophobic:hydrophilic interfaces and the rodlets further associate laterally to form amphipathic monolayers.

The protein localises to the secreted. It localises to the cell wall. Functionally, aerial growth, conidiation, and dispersal of filamentous fungi in the environment rely upon a capability of their secreting small amphipathic proteins called hydrophobins (HPBs) with low sequence identity. Class I can self-assemble into an outermost layer of rodlet bundles on aerial cell surfaces, conferring cellular hydrophobicity that supports fungal growth, development and dispersal; whereas Class II form highly ordered films at water-air interfaces through intermolecular interactions but contribute nothing to the rodlet structure. This chain is Class I hydrophobin C, found in Agaricus bisporus (White button mushroom).